A 666-amino-acid chain; its full sequence is Chaperone protein dnaK1 (666 aa).

A Phosphothreonine; by autocatalysis modification is found at Thr-198.

This sequence belongs to the heat shock protein 70 family.

In terms of biological role, acts as a chaperone. The sequence is that of Chaperone protein dnaK1 (dnaK1) from Prochlorococcus marinus (strain SARG / CCMP1375 / SS120).